The following is an 82-amino-acid chain: MSTYDEIEIEDMTFEPENQMFTYPCPCGDRFQIYLDDMFEGEKVAVCPSCSLMIDVVFDKEDLAEYYEEAGIHPPEPIAAAA.

Residues 3-59 enclose the DPH-type MB domain; it reads TYDEIEIEDMTFEPENQMFTYPCPCGDRFQIYLDDMFEGEKVAVCPSCSLMIDVVFD. Residues Cys-25, Cys-27, Cys-47, and Cys-50 each contribute to the Fe cation site. Residues 66-82 are required for interaction with the elongator complex; sequence YYEEAGIHPPEPIAAAA.

Belongs to the DPH3 family. As to quaternary structure, component of the 2-(3-amino-3-carboxypropyl)histidine synthase complex composed of DPH1, DPH2, KTI11/DPH3 and a NADH-dependent reductase, predominantly CBR1. Interacts with DPH1. Interacts with DPH2. Interacts with CBR1. Interacts with elongation factor 2. Interacts with ATS1/KTI13; the interaction is direct. Interacts with the 40S ribosomal protein RPS7A. Interacts with the 40S ribosomal protein RPS19A. Interacts with the elongator complex subunit IKI3/ELP1. Interacts with the elongator complex subunit ELP2. Interacts with the elongator complex subunit ELP3. Interacts with the elongator complex subunit ELP5.

Its subcellular location is the cytoplasm. It is found in the nucleus. It carries out the reaction [3Fe-4S](1+)-[protein] + Fe(2+)-[Dph3] = [3Fe-4S](0)-[protein] + Fe(3+)-[Dph3]. The enzyme catalyses 2 [3Fe-4S](0)-[protein] + 2 Fe(2+)-[Dph3] + NADH = 2 [4Fe-4S](1+)-[protein] + 2 [Dph3] + NAD(+) + H(+). It functions in the pathway protein modification; peptidyl-diphthamide biosynthesis. Its function is as follows. Required for the first step of diphthamide biosynthesis, a post-translational modification of histidine which occurs in elongation factor 2. DPH1 and DPH2 transfer a 3-amino-3-carboxypropyl (ACP) group from S-adenosyl-L-methionine (SAM) to a histidine residue, the reaction is assisted by a reduction system comprising KTI11/DPH3 and a NADH-dependent reductase, predominantly CBR1. Acts as an electron donor to reduce the Fe-S cluster in DPH1-DPH2 keeping the [4Fe-4S] clusters in the active and reduced state. Restores iron to DPH1-DPH2 iron-sulfur clusters which have degraded from [4Fe-4S] to [3Fe-4S] by donating an iron atom to reform [4Fe-4S] clusters, in a manner dependent on the presence of elongation factor 2 and SAM. Together with ATS1; associates with the elongator complex and is required for tRNA Wobble base modifications mediated by the elongator complex. The elongator complex is required for multiple tRNA modifications, including mcm5U (5-methoxycarbonylmethyl uridine), mcm5s 2U (5-methoxycarbonylmethyl-2-thiouridine), and ncm5U (5-carbamoylmethyl uridine). This Saccharomyces cerevisiae (strain ATCC 204508 / S288c) (Baker's yeast) protein is Diphthamide biosynthesis protein 3.